We begin with the raw amino-acid sequence, 856 residues long: MAP kinase phosphatase with leucine-rich repeats protein 3 (856 aa).

Residues Met1 to Gly10 show a composition bias toward low complexity. Disordered stretches follow at residues Met1–Ser24, Val84–Leu195, and Asp214–Asp326. A lipid anchor (N-myristoyl glycine) is attached at Gly2. A compositionally biased stretch (gly residues) spans Gly11 to Ser24. The segment covering Asn90–Gln142 has biased composition (low complexity). Residues Glu155–Arg165 are compositionally biased toward polar residues. 2 stretches are compositionally biased toward low complexity: residues Glu178–Leu195 and Gln224–Gln243. Composition is skewed to polar residues over residues Ile254 to Ile265 and Ala272 to Pro281. Low complexity predominate over residues Asn306 to Asn323. LRR repeat units follow at residues Lys344 to Ile365, Glu370 to Lys391, Ser392 to Glu413, Ser416 to Ile437, Asn439 to Ser461, Gln462 to Ile484, Asn485 to Val506, and Asn507 to Leu528. The disordered stretch occupies residues Asn554–Asn577. Residues Ile632–Cys773 enclose the Tyrosine-protein phosphatase domain. Catalysis depends on Cys717, which acts as the Phosphocysteine intermediate. Residues Ile810–Lys856 are disordered.

It belongs to the protein-tyrosine phosphatase family. Non-receptor class dual specificity subfamily.

It catalyses the reaction O-phospho-L-tyrosyl-[protein] + H2O = L-tyrosyl-[protein] + phosphate. The enzyme catalyses O-phospho-L-seryl-[protein] + H2O = L-seryl-[protein] + phosphate. It carries out the reaction O-phospho-L-threonyl-[protein] + H2O = L-threonyl-[protein] + phosphate. Functionally, probable phosphatase with dual specificity toward Ser/Thr and Tyr-containing proteins. This Dictyostelium discoideum (Social amoeba) protein is MAP kinase phosphatase with leucine-rich repeats protein 3 (mpl3).